The following is a 138-amino-acid chain: ATP synthase epsilon chain (138 aa).

This sequence belongs to the ATPase epsilon chain family. F-type ATPases have 2 components, CF(1) - the catalytic core - and CF(0) - the membrane proton channel. CF(1) has five subunits: alpha(3), beta(3), gamma(1), delta(1), epsilon(1). CF(0) has three main subunits: a, b and c.

It is found in the cell inner membrane. Its function is as follows. Produces ATP from ADP in the presence of a proton gradient across the membrane. This Endomicrobium trichonymphae protein is ATP synthase epsilon chain.